A 368-amino-acid polypeptide reads, in one-letter code: DNA replication and repair protein RecF (368 aa).

30–37 is an ATP binding site; sequence GKNGSGKT.

It belongs to the RecF family.

It is found in the cytoplasm. Functionally, the RecF protein is involved in DNA metabolism; it is required for DNA replication and normal SOS inducibility. RecF binds preferentially to single-stranded, linear DNA. It also seems to bind ATP. In Marinomonas sp. (strain MWYL1), this protein is DNA replication and repair protein RecF.